Here is a 1782-residue protein sequence, read N- to C-terminus: A-kinase anchor protein 12 (1782 aa).

Disordered stretches follow at residues 1 to 53, 71 to 169, 189 to 400, 421 to 886, 938 to 1089, 1105 to 1134, 1157 to 1274, and 1305 to 1355; these read MGAG…DPAT, QDEL…QAND, KTEK…APLA, VSTV…ELSE, EREV…LKKE, PFTQ…ESSE, AIPP…ADEK, and KGEG…HVNE. Glycine 2 carries the N-myristoyl glycine lipid modification. 5 positions are modified to phosphoserine: serine 11, serine 19, serine 28, serine 75, and serine 96. The span at 16–53 shows a compositional bias: low complexity; the sequence is PEGSSTPAEPEPSGGGPSAEAAPDTTADPAIAASDPAT. Residues 108–125 are compositionally biased toward basic and acidic residues; sequence GQRDSEDVSKRDSDKEMA. Over residues 145–154 the composition is skewed to low complexity; that stretch reads IIEQIPSSES. Serine 154 carries the phosphoserine modification. Over residues 157–168 the composition is skewed to polar residues; it reads EELTQPTESQAN. Phosphoserine is present on residues serine 219, serine 248, serine 258, serine 280, serine 283, serine 286, serine 347, and serine 371. Residues 226–249 show a composition bias toward basic and acidic residues; sequence ASKESEPKQSTEKPEETLKREQSH. An involved in PKC-binding region spans residues 266–557; sequence KEEGEEKQEK…TQVPADSPDS (292 aa). Composition is skewed to basic and acidic residues over residues 315-347 and 363-379; these read KPKE…EVAS and ESAH…KVEL. Tyrosine 374 is subject to Phosphotyrosine. 2 positions are modified to phosphoserine: serine 381 and serine 392. Residues 423–435 are compositionally biased toward basic and acidic residues; that stretch reads TVEERTEEQKTEV. Over residues 446–456 the composition is skewed to acidic residues; sequence ELVEMDAEPQE. A compositionally biased stretch (basic and acidic residues) spans 458–468; the sequence is EPAKELVKLKE. Phosphoserine is present on residues serine 483 and serine 505. The span at 528–537 shows a compositional bias: basic residues; it reads LSGKKQKGKR. A phosphoserine mark is found at serine 554, serine 557, serine 598, serine 612, serine 627, and serine 629. Residues 607–627 carry the AKAP CaM-binding 1 motif; that stretch reads VTPWASFKKMVTPKKRVRRPS. Over residues 625–639 the composition is skewed to basic and acidic residues; it reads RPSESDKEDELDKVK. Low complexity predominate over residues 640 to 652; that stretch reads SATLSSTESTASE. Residue threonine 642 is modified to Phosphothreonine. Phosphoserine is present on residues serine 644, serine 645, serine 648, and serine 651. Residues 655–674 show a composition bias toward basic and acidic residues; it reads EEMKGSVEEPKPEEPKRKVD. Serine 696, serine 697, and serine 698 each carry phosphoserine. Residues 708–724 are compositionally biased toward basic and acidic residues; sequence GGDHQKADEAGKDKETG. Polar residues predominate over residues 739-749; that stretch reads QGSSSPEQAGS. Phosphoserine is present on residues serine 749, serine 761, and serine 787. The AKAP CaM-binding 2 motif lies at 756 to 776; it reads VSTWESFKRLVTPRKKSKSKL. The span at 792 to 803 shows a compositional bias: basic and acidic residues; it reads STPDTEPGKEES. The AKAP CaM-binding 3 motif lies at 801 to 821; that stretch reads EESWVSIKKFIPGRRKKRPDG. Serine 806 is subject to Phosphoserine. A compositionally biased stretch (low complexity) spans 986 to 997; sequence GAEEGTEASAAE. Lysine 1051 is covalently cross-linked (Glycyl lysine isopeptide (Lys-Gly) (interchain with G-Cter in SUMO1)). The span at 1072 to 1089 shows a compositional bias: basic and acidic residues; sequence AEAERPEEQAEASGLKKE. The span at 1164–1174 shows a compositional bias: polar residues; that stretch reads ETPTDSETDGS. Composition is skewed to basic and acidic residues over residues 1187 to 1198 and 1231 to 1251; these read QKDEIVEIHEEN and EETK…KEVS. Positions 1253-1267 are enriched in polar residues; it reads ETVSILSKTEGTQEA. Serine 1328 and serine 1331 each carry phosphoserine. Basic and acidic residues predominate over residues 1333 to 1355; that stretch reads VEREMVVQVEREKTEAEPTHVNE. A phosphoserine mark is found at serine 1391 and serine 1395. The segment at 1541-1554 is RII-binding; the sequence is ELETKSSKLVQNII. Residues 1584-1782 form a disordered region; the sequence is KADSQDAGQE…ESAKSELTES (199 aa). Position 1587 is a phosphoserine (serine 1587). Positions 1603 to 1612 are enriched in polar residues; that stretch reads ASAQDETPIT. Composition is skewed to basic and acidic residues over residues 1629–1639 and 1675–1699; these read DISKDMSEASE and VPED…KEDE. The residue at position 1727 (serine 1727) is a Phosphoserine. 2 stretches are compositionally biased toward basic and acidic residues: residues 1734 to 1757 and 1766 to 1782; these read KQKE…ESDK and ELQK…LTES.

As to quaternary structure, binds to dimeric RII-alpha regulatory subunit of PKC. Expressed in endothelial cells, cultured fibroblasts and osteosarcoma, but not in platelets, leukocytes, monocytic cell lines or peripherical blood cells.

The protein resides in the cytoplasm. It is found in the cell cortex. The protein localises to the cytoskeleton. It localises to the membrane. Functionally, anchoring protein that mediates the subcellular compartmentation of protein kinase A (PKA) and protein kinase C (PKC). The protein is A-kinase anchor protein 12 (AKAP12) of Homo sapiens (Human).